Here is a 176-residue protein sequence, read N- to C-terminus: MYKTLCGTQLLLAIFVLFLNFSHATAKGTRGPMEIFKKNFMEKNKLNDVYDIFKFLYNKFSHDTYLSNIKNQSFTMNTWGFGEIEVVKTKCRKIDSDFYKCSFQWEFCNIKRTPGVTIYYITLPGSVRCRKLLSKLVNCPFEEQTEQLKREICYFQLYPDYIEQNIRSVRFNCYTK.

The signal sequence occupies residues 1 to 26; that stretch reads MYKTLCGTQLLLAIFVLFLNFSHATA. Positions 27 to 30 are excised as a propeptide; the sequence is KGTR. The N-linked (GlcNAc...) asparagine glycan is linked to asparagine 71. 2 cysteine pairs are disulfide-bonded: cysteine 129/cysteine 139 and cysteine 153/cysteine 173.

Belongs to the cystatin family. Prostate.

The polypeptide is Cystatin-related protein 2 (Crp2) (Rattus norvegicus (Rat)).